A 335-amino-acid chain; its full sequence is Fructose-1,6-bisphosphatase class 1 (335 aa).

Mg(2+)-binding residues include Glu-92, Asp-114, Leu-116, and Asp-117. Substrate-binding positions include 117 to 120 (DGSS) and Asn-209. Glu-281 is a binding site for Mg(2+).

This sequence belongs to the FBPase class 1 family. In terms of assembly, homotetramer. Requires Mg(2+) as cofactor.

The protein localises to the cytoplasm. The enzyme catalyses beta-D-fructose 1,6-bisphosphate + H2O = beta-D-fructose 6-phosphate + phosphate. Its pathway is carbohydrate biosynthesis; gluconeogenesis. The polypeptide is Fructose-1,6-bisphosphatase class 1 (Nitrosococcus oceani (strain ATCC 19707 / BCRC 17464 / JCM 30415 / NCIMB 11848 / C-107)).